Here is a 208-residue protein sequence, read N- to C-terminus: Holliday junction branch migration complex subunit RuvA (208 aa).

The interval 1 to 67 (MIGWLHGTIG…EDGQQLYGFE (67 aa)) is domain I. Positions 68-146 (TKADRNLFRL…ERWQQQGGST (79 aa)) are domain II. Residues 147–157 (PLRLVEPVAES) are flexible linker. The segment at 157 to 208 (SRELRATLEALGYGPEEVSAAVAQAGSQGLDPEQPMEEWLRHCLAWLSRQAG) is domain III.

Belongs to the RuvA family. Homotetramer. Forms an RuvA(8)-RuvB(12)-Holliday junction (HJ) complex. HJ DNA is sandwiched between 2 RuvA tetramers; dsDNA enters through RuvA and exits via RuvB. An RuvB hexamer assembles on each DNA strand where it exits the tetramer. Each RuvB hexamer is contacted by two RuvA subunits (via domain III) on 2 adjacent RuvB subunits; this complex drives branch migration. In the full resolvosome a probable DNA-RuvA(4)-RuvB(12)-RuvC(2) complex forms which resolves the HJ.

The protein resides in the cytoplasm. Functionally, the RuvA-RuvB-RuvC complex processes Holliday junction (HJ) DNA during genetic recombination and DNA repair, while the RuvA-RuvB complex plays an important role in the rescue of blocked DNA replication forks via replication fork reversal (RFR). RuvA specifically binds to HJ cruciform DNA, conferring on it an open structure. The RuvB hexamer acts as an ATP-dependent pump, pulling dsDNA into and through the RuvAB complex. HJ branch migration allows RuvC to scan DNA until it finds its consensus sequence, where it cleaves and resolves the cruciform DNA. The polypeptide is Holliday junction branch migration complex subunit RuvA (Synechococcus sp. (strain RCC307)).